The sequence spans 136 residues: Large ribosomal subunit protein uL16 (136 aa).

This sequence belongs to the universal ribosomal protein uL16 family. In terms of assembly, part of the 50S ribosomal subunit.

Binds 23S rRNA and is also seen to make contacts with the A and possibly P site tRNAs. This Shewanella woodyi (strain ATCC 51908 / MS32) protein is Large ribosomal subunit protein uL16.